The chain runs to 268 residues: Imidazole glycerol phosphate synthase subunit HisF (268 aa).

Residues Asp12 and Asp131 contribute to the active site.

It belongs to the HisA/HisF family. Heterodimer of HisH and HisF.

The protein resides in the cytoplasm. It carries out the reaction 5-[(5-phospho-1-deoxy-D-ribulos-1-ylimino)methylamino]-1-(5-phospho-beta-D-ribosyl)imidazole-4-carboxamide + L-glutamine = D-erythro-1-(imidazol-4-yl)glycerol 3-phosphate + 5-amino-1-(5-phospho-beta-D-ribosyl)imidazole-4-carboxamide + L-glutamate + H(+). It functions in the pathway amino-acid biosynthesis; L-histidine biosynthesis; L-histidine from 5-phospho-alpha-D-ribose 1-diphosphate: step 5/9. IGPS catalyzes the conversion of PRFAR and glutamine to IGP, AICAR and glutamate. The HisF subunit catalyzes the cyclization activity that produces IGP and AICAR from PRFAR using the ammonia provided by the HisH subunit. The polypeptide is Imidazole glycerol phosphate synthase subunit HisF (Methanosphaerula palustris (strain ATCC BAA-1556 / DSM 19958 / E1-9c)).